We begin with the raw amino-acid sequence, 85 residues long: Conotoxin Lt28.2 (85 aa).

Residues 1–21 form the signal peptide; that stretch reads MPKLEMMLLVLLILPLCYIDA. The propeptide occupies 22-40; sequence VGPPPPWNMEDEIIEHWQK.

It belongs to the conotoxin D superfamily. In terms of processing, contains 5 disulfide bonds. As to expression, expressed by the venom duct.

The protein localises to the secreted. Functionally, probable neurotoxin. This is Conotoxin Lt28.2 from Conus litteratus (Lettered cone).